A 337-amino-acid polypeptide reads, in one-letter code: S-adenosylmethionine:tRNA ribosyltransferase-isomerase (337 aa).

The protein belongs to the QueA family. Monomer.

It localises to the cytoplasm. The catalysed reaction is 7-aminomethyl-7-carbaguanosine(34) in tRNA + S-adenosyl-L-methionine = epoxyqueuosine(34) in tRNA + adenine + L-methionine + 2 H(+). It participates in tRNA modification; tRNA-queuosine biosynthesis. In terms of biological role, transfers and isomerizes the ribose moiety from AdoMet to the 7-aminomethyl group of 7-deazaguanine (preQ1-tRNA) to give epoxyqueuosine (oQ-tRNA). This is S-adenosylmethionine:tRNA ribosyltransferase-isomerase from Legionella pneumophila (strain Lens).